A 337-amino-acid chain; its full sequence is Anthraniloyl-CoA anthraniloyltransferase (337 aa).

Residues T29 and F33 each coordinate anthraniloyl-CoA. Residue C113 is the Acyl-thioester intermediate of the active site. Anthraniloyl-CoA-binding positions include 154-155 (RN), 221-224 (MRGR), and H258.

The protein belongs to the thiolase-like superfamily. FabH family. As to quaternary structure, homodimer.

The protein localises to the cytoplasm. It catalyses the reaction anthraniloyl-CoA + malonyl-CoA + H(+) = (2-aminobenzoyl)acetyl-CoA + CO2 + CoA. Required for the biosynthesis of a number of signaling molecules, such as the quinolone signal 2-heptyl-3-hydroxy-4(1H)-quinolone (PQS), 2-heptyl-4-hydroxyquinoline (HHQ) and 2,4-dihydroxyquinoline (DHQ). These molecules are required for normal biofilm formation. Catalyzes the transfer of the anthraniloyl moiety from anthraniloyl-CoA to malonyl-CoA to form 2-aminobenzoylacetyl-CoA. The first step of the reaction is the formation of a covalent anthraniloyl-PqsD intermediate. Next, the short-lived intermediate 3-(2-aminophenyl)-3-oxopropanoyl-CoA is formed. An intramolecular rearrangement of this intermediate can give rise to 2,4-dihydroxyquinoline (DHQ). The protein is Anthraniloyl-CoA anthraniloyltransferase (pqsD) of Pseudomonas aeruginosa (strain ATCC 15692 / DSM 22644 / CIP 104116 / JCM 14847 / LMG 12228 / 1C / PRS 101 / PAO1).